Reading from the N-terminus, the 1073-residue chain is Serine/threonine-protein kinase 11-interacting protein (1073 aa).

LRR repeat units follow at residues 166 to 187 (ELQTVNFSYNSITALDDSLQLL), 189 to 210 (ALRVLDLSHNKVQDCEHYLTTL), 212 to 233 (ELEYLNLAYNFLSKVPNLGIFS), 236 to 257 (KLLTLILRNNELDSINGVEQLV), 258 to 279 (NLQHLDVAYNLLLEHAQLAPLS), and 283 to 304 (YLKKLHLEGNPLWFHQNHRSAT). 4 disordered regions span residues 389 to 409 (VKVRRASISEPSDTEHESQAL), 455 to 533 (SRSA…EKPE), 724 to 817 (EVSS…QGMK), and 834 to 859 (MGSYRYSASRGPTSSQLSMTSDSEET). Acidic residues predominate over residues 515–532 (REEEADELMLGEEEDEKP). 2 stretches are compositionally biased toward polar residues: residues 779 to 788 (MDTSNSTRTP) and 843 to 859 (RGPTSSQLSMTSDSEET).

It belongs to the STK11IP family.

It is found in the cytoplasm. In Gallus gallus (Chicken), this protein is Serine/threonine-protein kinase 11-interacting protein (STK11IP).